A 53-amino-acid chain; its full sequence is Antilisterial bacteriocin subtilosin biosynthesis protein AlbB (53 aa).

Transmembrane regions (helical) follow at residues 8–28 (ILLY…FVKS) and 30–50 (YLFT…ARKA).

The protein resides in the cell membrane. Its function is as follows. Involved in the production of the bacteriocin subtilosin. Required for maximal production and for optimal immunity to subtilosin. This is Antilisterial bacteriocin subtilosin biosynthesis protein AlbB (albB) from Bacillus subtilis (strain 168).